The sequence spans 192 residues: uncharacterized protein (192 aa).

Residues 29-160 form the Nudix hydrolase domain; that stretch reads RRQAAVLIPL…PLDIQRRGHD (132 aa). The Nudix box motif lies at 67–89; it reads GAVDSTDASLIAAALREAHEEVA. Positions 83 and 87 each coordinate Mg(2+).

Belongs to the Nudix hydrolase family. PCD1 subfamily. Mn(2+) is required as a cofactor. Mg(2+) serves as cofactor.

Its function is as follows. Probably mediates the hydrolysis of some nucleoside diphosphate derivatives. This is an uncharacterized protein from Enterobacter sp. (strain 638).